A 208-amino-acid polypeptide reads, in one-letter code: Uracil phosphoribosyltransferase (208 aa).

5-phospho-alpha-D-ribose 1-diphosphate-binding positions include Arg-78, Arg-103, and 130 to 138 (DPMLATGGS). Uracil-binding positions include Ile-193 and 198-200 (GDA). Asp-199 contacts 5-phospho-alpha-D-ribose 1-diphosphate.

It belongs to the UPRTase family. Mg(2+) serves as cofactor.

The enzyme catalyses UMP + diphosphate = 5-phospho-alpha-D-ribose 1-diphosphate + uracil. Its pathway is pyrimidine metabolism; UMP biosynthesis via salvage pathway; UMP from uracil: step 1/1. With respect to regulation, allosterically activated by GTP. Catalyzes the conversion of uracil and 5-phospho-alpha-D-ribose 1-diphosphate (PRPP) to UMP and diphosphate. This is Uracil phosphoribosyltransferase from Proteus mirabilis (strain HI4320).